The following is a 31-amino-acid chain: MNNYTYKVNFNSISGVRHARIKCPIYTKNTF.

Its function is as follows. May serve a regulatory role in expression of downstream gene argF; in an argL-argF-lacZ fusion mutation of the start codon to a stop codon in argL increases expression of beta-galactosidase. In Escherichia coli (strain K12), this protein is Putative translational regulatory protein ArgL.